The chain runs to 310 residues: Homoserine kinase (310 aa).

Residue 91-101 coordinates ATP; that stretch reads PIGSGLGSSAC.

This sequence belongs to the GHMP kinase family. Homoserine kinase subfamily.

It localises to the cytoplasm. It carries out the reaction L-homoserine + ATP = O-phospho-L-homoserine + ADP + H(+). It participates in amino-acid biosynthesis; L-threonine biosynthesis; L-threonine from L-aspartate: step 4/5. Catalyzes the ATP-dependent phosphorylation of L-homoserine to L-homoserine phosphate. This Shigella flexneri serotype 5b (strain 8401) protein is Homoserine kinase.